An 85-amino-acid chain; its full sequence is LYR motif-containing protein 5A (85 aa).

The protein belongs to the complex I LYR family.

The chain is LYR motif-containing protein 5A (lyrm5a) from Danio rerio (Zebrafish).